Consider the following 324-residue polypeptide: Short chain dehydrogenase/reductase dmxR8 (324 aa).

Residues Leu-33, Lys-58, Asp-83, and Asn-110 each contribute to the NADP(+) site. Ser-163 serves as the catalytic Proton donor. Tyr-200 and Lys-204 together coordinate NADP(+). The Proton acceptor role is filled by Tyr-200. The active-site Lowers pKa of active site Tyr is the Lys-204.

Belongs to the short-chain dehydrogenases/reductases (SDR) family.

Its pathway is secondary metabolite biosynthesis. In terms of biological role, short chain dehydrogenase; part of the gene cluster that mediates the biosynthesis of the dimeric xanthones cryptosporioptides. The pathway begins with the synthesis of atrochrysone thioester by the polyketide synthase dmx-nrPKS. The atrochrysone carboxyl ACP thioesterase dmxR1 then breaks the thioester bond and releases the atrochrysone carboxylic acid from dmx-nrPKS. Atrochrysone carboxylic acid is decarboxylated by the decarboxylase dmxR15, and oxidized by the anthrone oxygenase dmxR16 to yield emodin. Emodin is then reduced to emodin hydroquinone by the oxidoreductase dmxR7. A-ring reduction by the short chain dehydrogenase dmxR18, dehydration by the scytalone dehydratase-like protein dmxR17 and probable spontaneous re-oxidation, results in overall deoxygenation to chrysophanol. Baeyer-Villiger oxidation by the Baeyer-Villiger monooxygenase (BVMO) dmxR6 then yields monodictylactone in equilibrium with monodictyphenone. In the case of the cryptosporioptides biosynthesis, monodictylactone is reduced at C-12 to an alcohol (by the short chain dehydrogenases dmxR12 or dmxR8) and hydroxylated at C-5 by dmxR9, yielding the electron-rich aromatic which could eliminate H(2)O to form the ortho-quinonemethide, followed by tautomerisation to paraquinone and complete the formal reduction to produce the 10-methylgroup. Conjugate addition of C-4a-OH to the resulting paraquinone by the monooxygenase dmxR10 then gives cyclohexadienone, which is then reduced at C-5 by the short chain dehydrogenase dmxR3 to give the dihydroxanthone. The 6,7-epoxide in the cryptosporioptides could be introduced by the cytochrome P450 monooxygenase dmxL3. The highly reducing PKS dmxL2 manufactures butyrate, which is further carboxylated by dmxL1 to form ethylmalonate. It is not yet clear whether the carboxylation occurs while the butyrate is attached to the ACP of dmxL2, but this unusual fungal metabolite could then be esterified to O-5 by the O-acetyltransferase dmxR13. Finally, dimerization performed by dmxR5 gives the observed dimers cryptosporioptides A, B and C as the final products of the pathway. This is Short chain dehydrogenase/reductase dmxR8 from Cryptosporiopsis sp. (strain 8999).